A 245-amino-acid chain; its full sequence is Uridylate kinase (245 aa).

12-15 (KLSG) is a binding site for ATP. The tract at residues 20–25 (GEKGVG) is involved in allosteric activation by GTP. G54 contacts UMP. The ATP site is built by G55 and R59. Residues D74 and 135-142 (IGSPYFST) contribute to the UMP site. Residues N163, Y169, and D172 each coordinate ATP.

The protein belongs to the UMP kinase family. Homohexamer.

It localises to the cytoplasm. The enzyme catalyses UMP + ATP = UDP + ADP. The protein operates within pyrimidine metabolism; CTP biosynthesis via de novo pathway; UDP from UMP (UMPK route): step 1/1. With respect to regulation, allosterically activated by GTP. Inhibited by UTP. Catalyzes the reversible phosphorylation of UMP to UDP. The protein is Uridylate kinase of Streptococcus thermophilus (strain ATCC BAA-491 / LMD-9).